Consider the following 254-residue polypeptide: Cell division protein ZapD (254 aa).

The protein belongs to the ZapD family. In terms of assembly, interacts with FtsZ.

The protein localises to the cytoplasm. Cell division factor that enhances FtsZ-ring assembly. Directly interacts with FtsZ and promotes bundling of FtsZ protofilaments, with a reduction in FtsZ GTPase activity. This Idiomarina loihiensis (strain ATCC BAA-735 / DSM 15497 / L2-TR) protein is Cell division protein ZapD.